A 398-amino-acid chain; its full sequence is Small ribosomal subunit protein mS78 (rPPR3a) (398 aa).

The transit peptide at 1 to 19 directs the protein to the mitochondrion; it reads MSSLSRVLRGTFNTCPIRR. PPR repeat units lie at residues 108–142, 143–173, 179–213, 214–248, 249–283, 284–318, and 319–353; these read KEGF…DCKR, SVLS…LPGK, DIVS…GLKP, DIVT…NVAI, DIRT…GLKP, DVFS…GYRP, and DKAT…RYLV.

The protein belongs to the PPR family. P subfamily. As to quaternary structure, component of the mitochondrial ribosome small subunit.

The protein resides in the mitochondrion. This chain is Small ribosomal subunit protein mS78 (rPPR3a), found in Arabidopsis thaliana (Mouse-ear cress).